The sequence spans 210 residues: Large ribosomal subunit protein uL4 (210 aa).

A disordered region spans residues 46-89; sequence QGTASTLTRSEVRGGGRKPYKQKGTGRARQGSIRTPLRPGGGII. Positions 60–71 are enriched in basic residues; it reads GGRKPYKQKGTG.

Belongs to the universal ribosomal protein uL4 family. Part of the 50S ribosomal subunit.

Functionally, one of the primary rRNA binding proteins, this protein initially binds near the 5'-end of the 23S rRNA. It is important during the early stages of 50S assembly. It makes multiple contacts with different domains of the 23S rRNA in the assembled 50S subunit and ribosome. Forms part of the polypeptide exit tunnel. The sequence is that of Large ribosomal subunit protein uL4 from Prochlorococcus marinus (strain MIT 9215).